Consider the following 193-residue polypeptide: Signal peptidase complex catalytic subunit SEC11 (193 aa).

Residues 1–16 (MFSEELKAFRRLGIRH) are Cytoplasmic-facing. Residues 17–41 (LLLQALNFASVIASGLMMWKGLGVI) form a helical; Signal-anchor for type II membrane protein membrane-spanning segment. Topologically, residues 42–193 (TNTESPIVVV…LGLMALIQRE (152 aa)) are lumenal. Catalysis depends on charge relay system residues Ser55 and His95. Asn106 carries N-linked (GlcNAc...) asparagine glycosylation. The Charge relay system role is filled by Asp136. A C-terminal short (CTS) helix region spans residues 179 to 190 (GLLGILGLMALI).

The protein belongs to the peptidase S26B family. As to quaternary structure, component of the signal peptidase complex (SPC) composed of a catalytic subunit SEC11 and three accessory subunits SPC1, SPC2 and SPC3. The complex induces a local thinning of the ER membrane which is used to measure the length of the signal peptide (SP) h-region of protein substrates. This ensures the selectivity of the complex towards h-regions shorter than 18-20 amino acids. SPC associates with the translocon complex.

It is found in the endoplasmic reticulum membrane. The enzyme catalyses Cleavage of hydrophobic, N-terminal signal or leader sequences from secreted and periplasmic proteins.. Catalytic component of the signal peptidase complex (SPC) which catalyzes the cleavage of N-terminal signal sequences from nascent proteins as they are translocated into the lumen of the endoplasmic reticulum. Specifically cleaves N-terminal signal peptides that contain a hydrophobic alpha-helix (h-region) shorter than 18-20 amino acids. This is Signal peptidase complex catalytic subunit SEC11 (SEC11) from Schizophyllum commune (strain H4-8 / FGSC 9210) (Split gill fungus).